The following is a 69-amino-acid chain: DNA gyrase inhibitor YacG (69 aa).

Zn(2+) is bound by residues cysteine 14, cysteine 17, cysteine 33, and cysteine 37. The tract at residues 46-69 is disordered; it reads ADEEKSIPGAPDMSDSDGWSEDQY. Acidic residues predominate over residues 59–69; the sequence is SDSDGWSEDQY.

The protein belongs to the DNA gyrase inhibitor YacG family. As to quaternary structure, interacts with GyrB. Zn(2+) is required as a cofactor.

Its function is as follows. Inhibits all the catalytic activities of DNA gyrase by preventing its interaction with DNA. Acts by binding directly to the C-terminal domain of GyrB, which probably disrupts DNA binding by the gyrase. The chain is DNA gyrase inhibitor YacG from Aliivibrio fischeri (strain ATCC 700601 / ES114) (Vibrio fischeri).